We begin with the raw amino-acid sequence, 102 residues long: DET1- and DDB1-associated protein 1 (102 aa).

At alanine 2 the chain carries N-acetylalanine. Phosphoserine occurs at positions 33 and 95. A disordered region spans residues 67-102 (NAAKKRDQEQVEAEGESSAPPRKVARTDSPDMPEDT).

It belongs to the DDA1 family. As to quaternary structure, component of numerous DCX (DDB1-CUL4-X-box) E3 ubiquitin-protein ligase complexes which consist of a core of DDB1, cullin-4 (CUL4A or CUL4B), DDA1 and RBX1. Component of the DCX(DCAF15) complex, also named CLR4(DCAF15) complex, composed of DCAF15, DDB1, cullin-4 (CUL4A or CUL4B), DDA1 and RBX1. Part of the DDD core complex containing DET1, DDA1 and DDB1; the DDD core complex recruits a specific UBE2E enzyme, such as UBE2E1, UBE2E2 UBE2E3, to form specific DDD-E2 complexes.

The protein operates within protein modification; protein ubiquitination. In terms of biological role, functions as a component of numerous distinct DCX (DDB1-CUL4-X-box) E3 ubiquitin-protein ligase complexes which mediate the ubiquitination and subsequent proteasomal degradation of target proteins. In the DCX complexes, acts as a scaffolding subunit required to stabilize the complex. This Mus musculus (Mouse) protein is DET1- and DDB1-associated protein 1.